We begin with the raw amino-acid sequence, 480 residues long: Cysteine--tRNA ligase (480 aa).

Zn(2+) is bound at residue Cys-29. The 'HIGH' region signature appears at 31-41; sequence VTVYDHCHIGH. The Zn(2+) site is built by Cys-209, His-234, and Glu-238. The short motif at 266-270 is the 'KMSKS' region element; that stretch reads KMSKS. Residue Lys-269 participates in ATP binding.

Belongs to the class-I aminoacyl-tRNA synthetase family. As to quaternary structure, monomer. Requires Zn(2+) as cofactor.

It is found in the cytoplasm. The catalysed reaction is tRNA(Cys) + L-cysteine + ATP = L-cysteinyl-tRNA(Cys) + AMP + diphosphate. This Geobacter sp. (strain M21) protein is Cysteine--tRNA ligase.